The sequence spans 343 residues: Ferrochelatase (343 aa).

His211 and Glu292 together coordinate Fe cation.

The protein belongs to the ferrochelatase family.

It localises to the cytoplasm. It catalyses the reaction heme b + 2 H(+) = protoporphyrin IX + Fe(2+). It participates in porphyrin-containing compound metabolism; protoheme biosynthesis; protoheme from protoporphyrin-IX: step 1/1. Catalyzes the ferrous insertion into protoporphyrin IX. The chain is Ferrochelatase from Gluconobacter oxydans (strain 621H) (Gluconobacter suboxydans).